A 1139-amino-acid polypeptide reads, in one-letter code: Protein lin-25 (1139 aa).

The Nuclear localization signal motif lies at 695–701; the sequence is IKKKKDP.

Expressed in seam cells and all six vulva precursor cells (VPC). After VPC division, expression is restricted to descendants of the VPC cell lineages P5.p, P6.p and P7.p (at protein level).

Its subcellular location is the nucleus. It is found in the cytoplasm. Participates in the inductive signaling pathway downstream of let-60 Ras and the RAF/MAP kinase cascade to regulate specification and differentiation of many cell types. Positively regulates the fate of vulval precursor cells. Required for induction of the P12 and excretory duct cell fates. In males, it is also required for proper formation of spicules. Does not function in the signaling pathway that promotes exit from pachytene. Plays a role in responses to M.nematophilum-mediated bacterial infection by promoting tail swelling and preventing constipation. This is Protein lin-25 (lin-25) from Caenorhabditis elegans.